A 466-amino-acid polypeptide reads, in one-letter code: Histidine--tRNA ligase (466 aa).

Belongs to the class-II aminoacyl-tRNA synthetase family. As to quaternary structure, homodimer.

It localises to the cytoplasm. It carries out the reaction tRNA(His) + L-histidine + ATP = L-histidyl-tRNA(His) + AMP + diphosphate + H(+). In Xylella fastidiosa (strain 9a5c), this protein is Histidine--tRNA ligase (hisS).